Here is a 293-residue protein sequence, read N- to C-terminus: Aromatic amino acid exporter YddG (293 aa).

Over 1 to 6 (MTSQKA) the chain is Cytoplasmic. The chain crosses the membrane as a helical span at residues 7-27 (TLIGLVAIVLWSTMVGLIRGV). In terms of domain architecture, EamA 1 spans 15 to 137 (VLWSTMVGLI…IALTGVCWVL (123 aa)). At 28 to 33 (SEGLGP) the chain is on the periplasmic side. A helical membrane pass occupies residues 34 to 54 (VGGAAMIYSLSGLLLIFTVGL). Residues 55-63 (PDIRRFPGR) lie on the Cytoplasmic side of the membrane. The chain crosses the membrane as a helical span at residues 64–84 (YLIAGSVLFVSYEICLALSLG). The Periplasmic segment spans residues 85–92 (YAATRHQA). A helical transmembrane segment spans residues 93 to 113 (IEVGMVNYLWPSLTILFAILF). The Cytoplasmic segment spans residues 114–119 (NGQKTN). The helical transmembrane segment at 120 to 140 (WLIVPGLLIALTGVCWVLGGE) threads the bilayer. The Periplasmic segment spans residues 141 to 147 (NGLNPGE). Residues 148 to 168 (IISNVATSPLSYLLAFLGAFI) form a helical membrane-spanning segment. The EamA 2 domain occupies 167 to 285 (FIWATYCTVT…AVMVCVGSLL (119 aa)). Topologically, residues 169–182 (WATYCTVTNKYARG) are cytoplasmic. A helical membrane pass occupies residues 183 to 203 (FNGITVFVLLTAVALWLHYFL). Over 204–207 (TPQP) the chain is Periplasmic. The chain crosses the membrane as a helical span at residues 208-228 (AMIFSLPVIAKLFTAALTLGF). Residues 229-243 (AYAAWNVGILHGNVT) are Cytoplasmic-facing. A helical transmembrane segment spans residues 244-264 (IMAVGSYFTPVMSSALAALLL). Topologically, residues 265–267 (SSP) are periplasmic. Residues 268–288 (LSFSFWQGAVMVCVGSLLCWL) form a helical membrane-spanning segment. Residues 289–293 (ATRRR) lie on the Cytoplasmic side of the membrane.

This sequence belongs to the drug/metabolite transporter (DMT) superfamily. Aromatic amino acid/paraquat exporter (ArAA/P-E) (TC 2.A.7.17) family.

The protein resides in the cell inner membrane. Functionally, amino acid transporter with broad substrate specificity. Required for resistance to methyl viologen. May function with OmpD porin. In Salmonella typhimurium (strain 14028s / SGSC 2262), this protein is Aromatic amino acid exporter YddG (yddG).